Consider the following 401-residue polypeptide: NADH-quinone oxidoreductase subunit D (401 aa).

It belongs to the complex I 49 kDa subunit family. As to quaternary structure, NDH-1 is composed of 14 different subunits. Subunits NuoB, C, D, E, F, and G constitute the peripheral sector of the complex.

The protein localises to the cell inner membrane. The catalysed reaction is a quinone + NADH + 5 H(+)(in) = a quinol + NAD(+) + 4 H(+)(out). Its function is as follows. NDH-1 shuttles electrons from NADH, via FMN and iron-sulfur (Fe-S) centers, to quinones in the respiratory chain. The immediate electron acceptor for the enzyme in this species is believed to be ubiquinone. Couples the redox reaction to proton translocation (for every two electrons transferred, four hydrogen ions are translocated across the cytoplasmic membrane), and thus conserves the redox energy in a proton gradient. This Rhodopseudomonas palustris (strain HaA2) protein is NADH-quinone oxidoreductase subunit D.